Consider the following 86-residue polypeptide: Large ribosomal subunit protein bL31B (86 aa).

This sequence belongs to the bacterial ribosomal protein bL31 family. Type B subfamily. As to quaternary structure, part of the 50S ribosomal subunit.

The sequence is that of Large ribosomal subunit protein bL31B from Vibrio vulnificus (strain YJ016).